The sequence spans 857 residues: Zinc finger protein 574 (857 aa).

14 C2H2-type zinc fingers span residues Y15–H37, Y58–H80, Y99–H121, Y206–H228, F297–H319, F324–H346, Y352–H374, F380–H401, F428–H451, H457–H479, Y485–H507, Y513–H535, Y541–H563, and Y569–H591. The segment at H597–K619 adopts a C2H2-type 15; degenerate zinc-finger fold. 5 C2H2-type zinc fingers span residues L628–H651, L681–H703, Y709–H731, F737–H759, and H765–H787. The tract at residues A648–G678 is disordered. Over residues H651–K663 the composition is skewed to polar residues.

This sequence belongs to the krueppel C2H2-type zinc-finger protein family.

The protein localises to the nucleus. Its function is as follows. May be involved in transcriptional regulation. This Xenopus tropicalis (Western clawed frog) protein is Zinc finger protein 574 (znf574).